The sequence spans 3083 residues: Laminin subunit alpha-1 (3083 aa).

An N-terminal signal peptide occupies residues 1–24 (MRGSGTGAALLVLLASVLWVTVRS). Gln25 carries the pyrrolidone carboxylic acid modification. A Laminin N-terminal domain is found at 25–276 (QQRGLFPAIL…SIKDISVGGM (252 aa)). Cystine bridges form between Cys277/Cys286, Cys279/Cys297, Cys299/Cys308, Cys311/Cys331, Cys334/Cys343, and Cys336/Cys368. 4 Laminin EGF-like domains span residues 277-333 (CICY…ECEE), 334-403 (CNCH…PCRP), 404-460 (CNCD…NCIP), and 461-509 (CDCR…GCSE). Asn370 is a glycosylation site (N-linked (GlcNAc...) asparagine). Disulfide bonds link Cys371–Cys380, Cys383–Cys401, Cys404–Cys416, Cys406–Cys434, Cys436–Cys445, Cys448–Cys458, Cys461–Cys474, Cys463–Cys478, Cys480–Cys489, and Cys492–Cys507. The 10-residue stretch at 510–519 (CFCFGVSGVC) folds into the Laminin EGF-like 5; first part domain. The region spanning 523 to 715 (TWSISQVTNM…DLAVAADVEH (193 aa)) is the Laminin IV type A 1 domain. Asn672 carries an N-linked (GlcNAc...) asparagine glycan. The 33-residue stretch at 716-748 (CECPQGYTGTSCEACLPGYYRVDGILFGGICQP) folds into the Laminin EGF-like 5; second part domain. Disulfide bonds link Cys749/Cys758, Cys751/Cys764, Cys767/Cys776, Cys779/Cys795, Cys798/Cys813, Cys800/Cys823, Cys826/Cys835, Cys838/Cys853, Cys856/Cys870, Cys858/Cys877, Cys880/Cys889, Cys892/Cys906, Cys909/Cys921, Cys911/Cys928, Cys930/Cys939, Cys942/Cys955, Cys958/Cys970, Cys960/Cys976, Cys978/Cys987, Cys990/Cys1002, Cys1005/Cys1014, Cys1007/Cys1021, Cys1023/Cys1032, Cys1035/Cys1048, Cys1051/Cys1063, Cys1053/Cys1070, Cys1072/Cys1081, Cys1084/Cys1094, Cys1097/Cys1109, Cys1099/Cys1125, Cys1127/Cys1136, and Cys1139/Cys1154. Laminin EGF-like domains lie at 749–797 (CECH…DCQP), 798–855 (CACP…TCVP), 856–908 (CNCS…NCRA), 909–957 (CDCH…GCVP), 958–1004 (CNCS…GCTP), 1005–1050 (CDCA…GCQA), 1051–1096 (CNCS…DCVP), and 1097–1156 (CGCD…GCSP). Positions 1147 to 1149 (RGD) match the Cell attachment site motif. In terms of domain architecture, Laminin EGF-like 14; first part spans 1157-1166 (CFCFGLSQLC). A Laminin IV type A 2 domain is found at 1177–1368 (ITLASDQPLL…EGEAALLLEL (192 aa)). Asn1344 is a glycosylation site (N-linked (GlcNAc...) asparagine). In terms of domain architecture, Laminin EGF-like 14; second part spans 1369–1409 (CVCPPGTAGHSCQDCAPGYYREKLPESGGRGPRPLLAPCVP). 12 disulfide bridges follow: Cys1410–Cys1419, Cys1412–Cys1426, Cys1429–Cys1438, Cys1441–Cys1456, Cys1459–Cys1473, Cys1461–Cys1483, Cys1486–Cys1495, Cys1498–Cys1513, Cys1516–Cys1528, Cys1518–Cys1535, Cys1537–Cys1546, and Cys1549–Cys1560. Laminin EGF-like domains are found at residues 1410 to 1458 (CNCN…DCTP), 1459 to 1515 (CTCP…SCQT), and 1516 to 1562 (CDCN…DCVS). The tract at residues 1564-2123 (DDDCVGPLLN…SRARKQVASI (560 aa)) is domain II and I. The stretch at 1617–1691 (AKKIRAEIQL…VATLNQTARK (75 aa)) forms a coiled coil. Asn1659, Asn1686, Asn1718, Asn1725, Asn1763, and Asn1811 each carry an N-linked (GlcNAc...) asparagine glycan. Positions 1723–1809 (QQNATLELKA…QEKKLRVQEE (87 aa)) form a coiled coil. Residues 1868 to 1901 (KRRARDLVHRAEQHASELQSRAGALDRDLENVRN) are a coiled coil. N-linked (GlcNAc...) asparagine glycosylation is found at Asn1935, Asn2026, Asn2045, and Asn2066. Laminin G-like domains are found at residues 2124 to 2304 (KVAV…CNGC), 2312 to 2488 (DSSF…RKGC), 2493 to 2679 (IQSV…LDTC), 2721 to 2893 (AHQF…VDRC), and 2898 to 3078 (QEGT…PHSC). Residues Cys2278 and Cys2304 are joined by a disulfide bond. Asn2355 is a glycosylation site (N-linked (GlcNAc...) asparagine). Cystine bridges form between Cys2464–Cys2488 and Cys2652–Cys2679. Asn2834 is a glycosylation site (N-linked (GlcNAc...) asparagine). Residues Cys2868 and Cys2893 are joined by a disulfide bond. A glycan (N-linked (GlcNAc...) asparagine) is linked at Asn2923. Cys3047 and Cys3078 form a disulfide bridge.

In terms of assembly, laminin is a complex glycoprotein, consisting of three different polypeptide chains (alpha, beta, gamma), which are bound to each other by disulfide bonds into a cross-shaped molecule comprising one long and three short arms with globules at each end. Alpha-1 is a subunit of laminin-1 (laminin-111 or EHS laminin) and laminin-3 (laminin-121 or S-laminin). Post-translationally, tyrosine phosphorylated by PKDCC/VLK.

The protein localises to the secreted. It localises to the extracellular space. The protein resides in the extracellular matrix. Its subcellular location is the basement membrane. Functionally, binding to cells via a high affinity receptor, laminin is thought to mediate the attachment, migration and organization of cells into tissues during embryonic development by interacting with other extracellular matrix components. The chain is Laminin subunit alpha-1 (Lama1) from Mus musculus (Mouse).